Reading from the N-terminus, the 492-residue chain is Aspartyl/glutamyl-tRNA(Asn/Gln) amidotransferase subunit B (492 aa).

This sequence belongs to the GatB/GatE family. GatB subfamily. In terms of assembly, heterotrimer of A, B and C subunits.

It carries out the reaction L-glutamyl-tRNA(Gln) + L-glutamine + ATP + H2O = L-glutaminyl-tRNA(Gln) + L-glutamate + ADP + phosphate + H(+). The catalysed reaction is L-aspartyl-tRNA(Asn) + L-glutamine + ATP + H2O = L-asparaginyl-tRNA(Asn) + L-glutamate + ADP + phosphate + 2 H(+). Allows the formation of correctly charged Asn-tRNA(Asn) or Gln-tRNA(Gln) through the transamidation of misacylated Asp-tRNA(Asn) or Glu-tRNA(Gln) in organisms which lack either or both of asparaginyl-tRNA or glutaminyl-tRNA synthetases. The reaction takes place in the presence of glutamine and ATP through an activated phospho-Asp-tRNA(Asn) or phospho-Glu-tRNA(Gln). The chain is Aspartyl/glutamyl-tRNA(Asn/Gln) amidotransferase subunit B from Bradyrhizobium sp. (strain BTAi1 / ATCC BAA-1182).